Reading from the N-terminus, the 186-residue chain is dCTP deaminase (186 aa).

Lys-107 to Arg-112 serves as a coordination point for dCTP. The Proton donor/acceptor role is filled by Glu-133. Residues Gln-152, Tyr-166, and Gln-176 each contribute to the dCTP site.

It belongs to the dCTP deaminase family. Homotrimer.

The enzyme catalyses dCTP + H2O + H(+) = dUTP + NH4(+). It participates in pyrimidine metabolism; dUMP biosynthesis; dUMP from dCTP (dUTP route): step 1/2. In terms of biological role, catalyzes the deamination of dCTP to dUTP. This is dCTP deaminase from Campylobacter jejuni subsp. jejuni serotype O:2 (strain ATCC 700819 / NCTC 11168).